Here is a 362-residue protein sequence, read N- to C-terminus: MHSFASLLRYGLAAGATLASASPIEARDSCTFTTAAAAKAGKAKCSTITLDSIKVPAGTTLDLTGLTSGTKVIFEGTTTFDYEDWAGPLISMSGKDITVTGASGHLINCDGSRWWDGKGTSGKKKPKFFYAHGLDSSSITGLNIKNTPLMAFSVESDDITLTDITINNADGDSLGGHNTDAFDVGNSVGVNIIKPWVHNQDDCLAINSGENIWFTGGTCIGGHGLSIGSVGDRSNNVVKNVTIEHSTVSNSENAVRIKTISGATGSVSEITYSNIVMSGISDYGVVIQQDYEDGKPTGKPTNGVTITDVKLESVTGTVDSKATDIYLLCGSGSCSDWTWDDVKVTGGKKSSACKNLPSVASC.

An N-terminal signal peptide occupies residues 1–20; that stretch reads MHSFASLLRYGLAAGATLAS. The propeptide occupies 21–27; the sequence is ASPIEAR. A disulfide bridge links Cys30 with Cys45. One copy of the PbH1 1 repeat lies at 156–186; it reads SDDITLTDITINNADGDSLGGHNTDAFDVGN. Residue Asp201 is the Proton donor of the active site. The cysteines at positions 203 and 219 are disulfide-linked. PbH1 repeat units follow at residues 209–229, 238–259, 267–289, and 301–322; these read GENI…SIGS, VKNV…RIKT, VSEI…VIQQ, and TNGV…DSKA. His223 is an active-site residue. Residue Asn240 is glycosylated (N-linked (GlcNAc...) asparagine). Cystine bridges form between Cys329–Cys334 and Cys353–Cys362.

Belongs to the glycosyl hydrolase 28 family.

The protein resides in the secreted. The catalysed reaction is (1,4-alpha-D-galacturonosyl)n+m + H2O = (1,4-alpha-D-galacturonosyl)n + (1,4-alpha-D-galacturonosyl)m.. In terms of biological role, involved in maceration and soft-rotting of plant tissue. Hydrolyzes the 1,4-alpha glycosidic bonds of de-esterified pectate in the smooth region of the plant cell wall. In Aspergillus awamori (Black koji mold), this protein is Endopolygalacturonase II (pgaII).